Reading from the N-terminus, the 337-residue chain is Retrovirus-related Pol polyprotein from type-1 retrotransposable element R1 (337 aa).

One can recognise a Reverse transcriptase domain in the interval 1 to 118 (GCPQGSISGP…KSARYLGVCM (118 aa)). Residues 253–337 (KRARSCKLMK…ACPCGAPRED (85 aa)) are nucleic acid-binding endonuclease.

It carries out the reaction DNA(n) + a 2'-deoxyribonucleoside 5'-triphosphate = DNA(n+1) + diphosphate. The sequence is that of Retrovirus-related Pol polyprotein from type-1 retrotransposable element R1 from Nasonia vitripennis (Parasitic wasp).